Here is a 478-residue protein sequence, read N- to C-terminus: Ankyrin repeat and BTB/POZ domain-containing protein 1 (478 aa).

2 ANK repeats span residues 1-31 (MDTS…EVNV) and 35-64 (WDST…RCEA). 2 consecutive BTB domains span residues 115–182 (SDVV…DIGV) and 272–346 (PDIC…ELPP). A coiled-coil region spans residues 450-478 (TVQTYSAIEEAQQQLRALENLLVSIGLDC).

Its subcellular location is the cytoplasm. Its function is as follows. May act as a mediator of the PTEN growth-suppressive signaling pathway. May play a role in developmental processes. This chain is Ankyrin repeat and BTB/POZ domain-containing protein 1, found in Rattus norvegicus (Rat).